Consider the following 268-residue polypeptide: Undecaprenyl-diphosphatase (268 aa).

The next 7 membrane-spanning stretches (helical) occupy residues 5–25 (SIIS…IPVS), 43–63 (GNTF…LVYF), 84–104 (FSVL…HGFI), 107–127 (VLFE…IILY), 184–204 (AAEF…ALDL), 213–233 (FDDV…GIFV), and 248–268 (PFAI…WLLG).

Belongs to the UppP family.

It localises to the cell inner membrane. It catalyses the reaction di-trans,octa-cis-undecaprenyl diphosphate + H2O = di-trans,octa-cis-undecaprenyl phosphate + phosphate + H(+). Catalyzes the dephosphorylation of undecaprenyl diphosphate (UPP). Confers resistance to bacitracin. The polypeptide is Undecaprenyl-diphosphatase (Rhizobium meliloti (strain 1021) (Ensifer meliloti)).